Reading from the N-terminus, the 278-residue chain is Polyamine aminopropyltransferase (278 aa).

Positions 5–238 (ELWFTEQQTP…GLWSFTMGSK (234 aa)) constitute a PABS domain. Glutamine 34 is an S-methyl-5'-thioadenosine binding site. Spermidine-binding residues include histidine 65 and aspartate 89. S-methyl-5'-thioadenosine is bound by residues glutamate 109 and 140–141 (DG). Catalysis depends on aspartate 158, which acts as the Proton acceptor. 158 to 161 (DSTD) is a spermidine binding site. Proline 165 provides a ligand contact to S-methyl-5'-thioadenosine.

This sequence belongs to the spermidine/spermine synthase family. Homodimer or homotetramer.

The protein resides in the cytoplasm. The catalysed reaction is S-adenosyl 3-(methylsulfanyl)propylamine + putrescine = S-methyl-5'-thioadenosine + spermidine + H(+). It functions in the pathway amine and polyamine biosynthesis; spermidine biosynthesis; spermidine from putrescine: step 1/1. In terms of biological role, catalyzes the irreversible transfer of a propylamine group from the amino donor S-adenosylmethioninamine (decarboxy-AdoMet) to putrescine (1,4-diaminobutane) to yield spermidine. The protein is Polyamine aminopropyltransferase of Caldicellulosiruptor saccharolyticus (strain ATCC 43494 / DSM 8903 / Tp8T 6331).